Reading from the N-terminus, the 184-residue chain is Gastrokine-2 (184 aa).

The signal sequence occupies residues 1–20; that stretch reads MKSLVAFLVVLSILRIQSQA. A BRICHOS domain is found at 54–151; the sequence is HSGSCSSTTI…LCKHIPLYEG (98 aa). A disulfide bond links C81 and C143.

As to quaternary structure, heterodimer with TFF1; disulfide linked. Interacts with TFF2.

It localises to the secreted. The polypeptide is Gastrokine-2 (Gkn2) (Rattus norvegicus (Rat)).